The primary structure comprises 291 residues: tRNA U34 carboxymethyltransferase (291 aa).

Residues lysine 61, tryptophan 75, lysine 80, glycine 100, 122–124, 149–150, tyrosine 169, and arginine 284 contribute to the carboxy-S-adenosyl-L-methionine site; these read DPS and VE.

This sequence belongs to the class I-like SAM-binding methyltransferase superfamily. CmoB family. Homotetramer.

The catalysed reaction is carboxy-S-adenosyl-L-methionine + 5-hydroxyuridine(34) in tRNA = 5-carboxymethoxyuridine(34) in tRNA + S-adenosyl-L-homocysteine + H(+). Its function is as follows. Catalyzes carboxymethyl transfer from carboxy-S-adenosyl-L-methionine (Cx-SAM) to 5-hydroxyuridine (ho5U) to form 5-carboxymethoxyuridine (cmo5U) at position 34 in tRNAs. This chain is tRNA U34 carboxymethyltransferase, found in Campylobacter jejuni (strain RM1221).